The primary structure comprises 2869 residues: MNINRNNINDSNRHSTSFNDNFDSFGNQNGFINNNSNNNNNNKNNNNNKNNNNNNNNNDYNNNNNRSSNNGDNCNNNNINKNNYNNNYNNNNSFDNNNFNNNNNKGFNDSNNNNHTNNNINPKNNFDRSSNKGFGPLNDNFILSPIKNIFRGDFCNESIVLKPIKENIKINNNNNNNKDNNNSNFNNNNTNNDNNNNNNNNNNNNNNNNNNNNNNNNNNNNNNNNNINNNNYDYNNNTNFNNNNTNNNNNYNNYNNNNNNNNNTNFNNNTNNTNNKNKNNSNNTTNNTNNYNKNNNNNNNNNKNNNNNNNNNNNNNNNNNNNNNNSNNNNNNNINNKNNNNLNNYDNYRCNYQNSRIPNSACSTPLSSISPTQQETFLKFNESGGGLNNNTNFNNQTFGNNNKNQNNDNNLNNNDNDKNNYYDNQYNSNIDNIGNSDDSIGGQTNKNKNKNKNKNNNNNNNNNNNNNNNNNNNNNSNNDQKTSSSLDTMIDENWDQHKEKHNKKHENGDISESKPKKKIKSKYDLNIENSLKILTNFNNLNEKVEDVIQMDPVEKEFQNDLRIYSIVREISVSELETKSNNELIDISRILGLPVHKNHRSEIFFKLFNYLNFFKKKMEKKIEQRGLELKDILINSRPSEYNDYSFQNQKKQKTEQREHKDILANRIQNQIQEQVQNQIQFLIQNYNQNQNQNQKQNQNQNQKNQNHQPQPPLQPQRQRYFPQDKPQNQNNQPPLQHQHQYQYQYQNQDQYQDHDHEHEHDHDQNQNQNQNQHQSRNQNQDQYQDHDHEHEHDHDQNQNQNQYQSQNQQNQNQNQNQNLIQIQNHNRDIANYSLSNRDSNSRNEDNSCDFNYNSSCNNININNNNNNNNNNNNNNNNYYNYNQNQNQNQSQNHNRGILDNRINSNNSLSSRDSNGRNRDNSCDFNNYKKSSNNSNSNNNNNINNNNNNNNNNNNNNNNNNNKNNNNNNNNKNNNSNNNSYTCNNNSNNSFNNLSSIDRGYNNHNTNPNNPNNNPNNPNNNPNNPNNPNNPNNNTSNTSNTSNTNNTNNTNNTNTSNYNSNNSNSNNSNSDNINSNNINTNINTNINSNTNSNSNTNNINNINSNNINNINNINSNNNNNNPNPNTNSNNINTASNDSNSNNINTNSNNINPNINSDSNNNFNNNNNSNNNNINSNSNIFNNINSSIDRSNSNGFNNNNSNDQRNIDSSSNSDIVDVDSDDDSSGVFIVDDTSSNKSNRASSVKTLGTSSLAIKHEYDSRNKSSLNFFSDQTTLEDGNTSFDEKVLYIKRVLINDFRSKNHIVDMGKAIGIDVPPKDTKANVLTLMIAFVNDYLDQKKKRLESNSSWDPNGGNYIDHNEFFKTPTPGQRQVYNDDINDDNGNNNNNNSNNNINTNNNININTNINTNTNNNTNNNTNINTNANTNTNTYSNTNINNNTNTNSNGFNGNNIDNGSLNNNNFNNNSNNIDNGSLNNSNNIDNCSLNNNSNNNNNSNSNSNSNNNNNNNNYYNNNNNNNNNYNNYNGSYNCNNNNNSYYYNNNSSNNNNNSYNNNNNYYNSNNNNNNNNNNNNNNNNNNNNNNNNNNNNNNNNRYDCNNNNNYSNNNSNSNSNNNSNYSNNSYDCNNDNNNNIFSNSNGHNDNDIGNDFDNDNDNDSYIDDDNNVYDNNDGDYNNNKNNNYNNNNNNNNNNNNSNNNNNNNNNNRSNYYGNEDNNINCIDTNGNGNGNIYSCSNSNSNSYSNSNSNSNSNSNSNSNNNSNNSNNSNNSNSNSNNNINNNNINNNNTNNNNNNNSYICNNNNNNNNNNNNKNNNNNNNNNNNNNNNNNSLYGKDNEGFSNQINDNFNFYKSQGNNILEDFNLNNFQTNDKILKEMIDKLNNYGISIKPKIGKGNSQMIVNEGERENKERLFWSVFRDKSLLDKIVSYLAECIQGKPKLTSFKYYNIVHIKWMLDNDYIELIQDKVFRNETLLFGAYKSEDMTKEEVVSILFKKVNQKNCKNSEEIEKQLKFYQLLVHRFGNEIFKGINGGIQGLLELAITAKNSIALIVLFSMIESNYTLTDEILLNSFKCTIKVNSFSMIKLITFKIIKKDYQIIRNYQEVTNTTFEQIFQSIINPSIKIINFLIDIGIVMFSFKRDDSPPICFDSILVKSNSNTLASEISTRKKNLRFVKEYKTIIGESGFINSNCGVISIEMDKHEPHPSRPSIFNKNSLKEIINACYLNINFNYDKNSPLLKRQIETLFLFYPVFYSTVEVISIITNRIEAVRNCFSKEQLSLKLKHLIKIYPEDSIQFKGINCLVSFYLSFDFQSKFYCLYLHYLIFGNFISNINSDVLNVLPKDFDLNYFEKSLKYGSSIYCAKFKNEIARNFPKLVKDKKFFILFKHCDKNSVASRYKKLEFFRTIINQQSHSTERCNFALFCLLISTNDLELIEAACNEFTVFKEGFSYDFRDKQSNLYKYCNQMYFKVKITIIDFIKTVEVSHFTLQNYLYLFKDFEKDFQVKHFKSSEVFIHYCQTFLSNYRGNNGQLVFIDTHVGDNMDLKSYNSFWNIVAFLIRNPLNINFKIIDPYTLFFNITLKISNINVDNNNNSAVMNSNQRDYEIFNNIFENIKYVITNYQPNGYIVYYKPSSLFGGDLYWCNKLIDWIFDNAKDDIINKRCKIEESDLIKCGKFNYLFYERGYYYFDSIRNRYLPFSGHPILDSGRLGNINLLHLFLNTSGLQIFEKEANREDRVRKQKGKKDKESSSSGSSIGNPSSSGGSDFYNLDDSENESDSENNNEIEDDMKSIYRFKEDFTSILMNASRYGRLNIFQYLYFNYPFLVSKRSWIAADNLVSKATRFGLLQNTTFQNIGKTAEDNGKSSYSLNFLINFILRFL.

The segment covering Met-1 to Asp-10 has biased composition (low complexity). Disordered stretches follow at residues Met-1–Lys-132, Asn-171–Arg-349, Phe-380–Ser-485, Lys-498–Lys-517, Asn-690–Gln-812, Ile-860–Asn-1074, Ile-1108–Ser-1175, Ser-1188–Asp-1216, Val-1224–Thr-1243, Glu-1340–Ile-1448, Ile-1476–Tyr-1704, Asn-1731–Phe-1832, and Asp-2725–Glu-2773. Residues His-14–Phe-25 show a composition bias toward polar residues. 5 stretches are compositionally biased toward low complexity: residues Gly-26–Asn-124, Asn-171–Tyr-348, Asn-388–Asn-414, Tyr-421–Lys-446, and Lys-454–Asn-478. The span at His-505–Lys-514 shows a compositional bias: basic and acidic residues. Composition is skewed to low complexity over residues Asn-690 to Gln-707 and Pro-714 to Gln-749. A compositionally biased stretch (basic and acidic residues) spans Tyr-750–Gln-763. Over residues Asn-764–Gln-781 the composition is skewed to low complexity. Residues Tyr-782–Gln-795 show a composition bias toward basic and acidic residues. 5 stretches are compositionally biased toward low complexity: residues Asn-796–Gln-812, Ile-860–Asn-891, Asp-898–Asp-911, Cys-921–Asn-991, and Asn-1000–Asn-1074. Over residues Ser-1188 to Ile-1212 the composition is skewed to low complexity. The segment covering Thr-1230–Thr-1243 has biased composition (polar residues). Composition is skewed to low complexity over residues Asp-1377–Ile-1448 and Ile-1476–Asp-1639. Residues Ile-1640–Asn-1659 are compositionally biased toward acidic residues. Low complexity-rich tracts occupy residues Val-1660–Tyr-1704, Asn-1731–Ser-1823, and Ser-2739–Ser-2754. The span at Asn-2758–Glu-2773 shows a compositional bias: acidic residues.

This is an uncharacterized protein from Dictyostelium discoideum (Social amoeba).